Consider the following 449-residue polypeptide: Asparagine--tRNA ligase (449 aa).

The protein belongs to the class-II aminoacyl-tRNA synthetase family. Homodimer.

It localises to the cytoplasm. The catalysed reaction is tRNA(Asn) + L-asparagine + ATP = L-asparaginyl-tRNA(Asn) + AMP + diphosphate + H(+). The sequence is that of Asparagine--tRNA ligase from Mesomycoplasma hyopneumoniae (strain 232) (Mycoplasma hyopneumoniae).